Here is a 148-residue protein sequence, read N- to C-terminus: uncharacterized protein (148 aa).

The disordered stretch occupies residues 83-148; sequence QPAVIPPVKA…TKKSNKKTRS (66 aa). 2 stretches are compositionally biased toward basic residues: residues 92-103 and 113-124; these read AKPKATKKKTPV and KQTKPKQSKPKS.

This is an uncharacterized protein from Mycoplasma genitalium (strain ATCC 33530 / DSM 19775 / NCTC 10195 / G37) (Mycoplasmoides genitalium).